The chain runs to 295 residues: Transmembrane protein 71 (295 aa).

2 helical membrane passes run 229–249 (LLQEVFFQAILLAVCLIISAC) and 253–273 (FMGEILASVFTCSLMITVAYV).

This sequence belongs to the TMEM71 family.

It localises to the membrane. This is Transmembrane protein 71 (TMEM71) from Homo sapiens (Human).